The primary structure comprises 73 residues: Hypotensin-like peptide (73 aa).

The N-terminal stretch at 1–25 (MKMMIAIVFVSILLLMFSLSSTAMG) is a signal peptide.

As to expression, expressed by the venom gland.

The protein localises to the secreted. In terms of biological role, may potentiate the hypotensive effect of bradykinin. The sequence is that of Hypotensin-like peptide from Tityus serrulatus (Brazilian scorpion).